A 421-amino-acid chain; its full sequence is Gamma-glutamyl phosphate reductase (421 aa).

It belongs to the gamma-glutamyl phosphate reductase family.

It localises to the cytoplasm. It carries out the reaction L-glutamate 5-semialdehyde + phosphate + NADP(+) = L-glutamyl 5-phosphate + NADPH + H(+). Its pathway is amino-acid biosynthesis; L-proline biosynthesis; L-glutamate 5-semialdehyde from L-glutamate: step 2/2. In terms of biological role, catalyzes the NADPH-dependent reduction of L-glutamate 5-phosphate into L-glutamate 5-semialdehyde and phosphate. The product spontaneously undergoes cyclization to form 1-pyrroline-5-carboxylate. This is Gamma-glutamyl phosphate reductase from Herminiimonas arsenicoxydans.